The primary structure comprises 257 residues: Tryptophan synthase alpha chain (257 aa).

Catalysis depends on proton acceptor residues E44 and D55.

It belongs to the TrpA family. As to quaternary structure, tetramer of two alpha and two beta chains.

It carries out the reaction (1S,2R)-1-C-(indol-3-yl)glycerol 3-phosphate + L-serine = D-glyceraldehyde 3-phosphate + L-tryptophan + H2O. It participates in amino-acid biosynthesis; L-tryptophan biosynthesis; L-tryptophan from chorismate: step 5/5. Its function is as follows. The alpha subunit is responsible for the aldol cleavage of indoleglycerol phosphate to indole and glyceraldehyde 3-phosphate. The chain is Tryptophan synthase alpha chain from Chlamydia felis (strain Fe/C-56) (Chlamydophila felis).